The chain runs to 438 residues: Alpha-methylserine aldolase (438 aa).

Residue lysine 252 is modified to N6-(pyridoxal phosphate)lysine.

It belongs to the SHMT family. Alpha-methylserine aldolase subfamily. As to quaternary structure, homodimer. Pyridoxal 5'-phosphate serves as cofactor.

It catalyses the reaction 2-methyl-L-serine = formaldehyde + L-alanine. Its activity is regulated as follows. In the alpha-methyl-L-serine synthesis reaction, activity is inhibited by an excess amount of formaldehyde (at a concentration greater than 10 mM). In terms of biological role, catalyzes the reversible interconversion of alpha-methyl-L-serine to L-alanine and formaldehyde. Cannot use alpha-methyl-D-serine, L-serine or D-serine. Cannot use D-alanine instead of L-alanine as the substrate for alpha-methyl-L-serine synthesis. Does not require tetrahydrofolate (THF) for activity. This is Alpha-methylserine aldolase from Ralstonia sp.